Consider the following 264-residue polypeptide: Glutamate racemase (264 aa).

Substrate-binding positions include 10–11 (DS) and 42–43 (YG). Cys73 functions as the Proton donor/acceptor in the catalytic mechanism. A substrate-binding site is contributed by 74–75 (NT). Cys183 acts as the Proton donor/acceptor in catalysis. A substrate-binding site is contributed by 184-185 (TH).

It belongs to the aspartate/glutamate racemases family.

The catalysed reaction is L-glutamate = D-glutamate. It participates in cell wall biogenesis; peptidoglycan biosynthesis. Provides the (R)-glutamate required for cell wall biosynthesis. This Streptococcus pyogenes serotype M3 (strain ATCC BAA-595 / MGAS315) protein is Glutamate racemase.